The following is a 345-amino-acid chain: NADH-quinone oxidoreductase subunit H (345 aa).

8 helical membrane passes run 9 to 29, 82 to 102, 108 to 128, 154 to 174, 183 to 203, 241 to 261, 282 to 302, and 325 to 345; these read ALGA…LVFA, VVMV…EGVV, VGVI…TLAG, MGLA…MEIV, LLGW…VTAF, YVNW…GYLV, LLQF…FIWV, and IALA…AVGL.

Belongs to the complex I subunit 1 family. As to quaternary structure, NDH-1 is composed of 14 different subunits. Subunits NuoA, H, J, K, L, M, N constitute the membrane sector of the complex.

The protein localises to the cell inner membrane. The enzyme catalyses a quinone + NADH + 5 H(+)(in) = a quinol + NAD(+) + 4 H(+)(out). In terms of biological role, NDH-1 shuttles electrons from NADH, via FMN and iron-sulfur (Fe-S) centers, to quinones in the respiratory chain. The immediate electron acceptor for the enzyme in this species is believed to be ubiquinone. Couples the redox reaction to proton translocation (for every two electrons transferred, four hydrogen ions are translocated across the cytoplasmic membrane), and thus conserves the redox energy in a proton gradient. This subunit may bind ubiquinone. This is NADH-quinone oxidoreductase subunit H from Salinibacter ruber (strain DSM 13855 / M31).